Here is a 282-residue protein sequence, read N- to C-terminus: Bifunctional protein FolD (282 aa).

NADP(+) is bound by residues 165 to 167 (GAS) and Ile-231.

Belongs to the tetrahydrofolate dehydrogenase/cyclohydrolase family. As to quaternary structure, homodimer.

The enzyme catalyses (6R)-5,10-methylene-5,6,7,8-tetrahydrofolate + NADP(+) = (6R)-5,10-methenyltetrahydrofolate + NADPH. It catalyses the reaction (6R)-5,10-methenyltetrahydrofolate + H2O = (6R)-10-formyltetrahydrofolate + H(+). It participates in one-carbon metabolism; tetrahydrofolate interconversion. Catalyzes the oxidation of 5,10-methylenetetrahydrofolate to 5,10-methenyltetrahydrofolate and then the hydrolysis of 5,10-methenyltetrahydrofolate to 10-formyltetrahydrofolate. The protein is Bifunctional protein FolD of Francisella tularensis subsp. holarctica (strain FTNF002-00 / FTA).